The primary structure comprises 152 residues: Antiholin-like protein LrgA (152 aa).

4 helical membrane passes run 23–43, 45–65, 77–97, and 108–128; these read YSIF…KIIE, FMPI…IALC, VGTA…ISVI, and ILII…TGFA.

This sequence belongs to the CidA/LrgA family. LrgA subfamily.

It localises to the cell membrane. Functionally, inhibits the expression or activity of extracellular murein hydrolases by interacting, possibly with LrgB, with the holin-like proteins CidA and/or CidB. The LrgAB and CidAB proteins may affect the proton motive force of the membrane. May be involved in programmed cell death (PCD), possibly triggering PCD in response to antibiotics and environmental stresses. In Staphylococcus epidermidis (strain ATCC 35984 / DSM 28319 / BCRC 17069 / CCUG 31568 / BM 3577 / RP62A), this protein is Antiholin-like protein LrgA.